We begin with the raw amino-acid sequence, 60 residues long: MDAKLLELLVCPVTKGPLRFDREHQELVSRSARLAYPVRDGIPVLLEAEARTLDDDELED.

This sequence belongs to the UPF0434 family.

This chain is UPF0434 protein Daci_3569, found in Delftia acidovorans (strain DSM 14801 / SPH-1).